A 317-amino-acid polypeptide reads, in one-letter code: Carbamate kinase (317 aa).

This sequence belongs to the carbamate kinase family. As to quaternary structure, homodimer.

The enzyme catalyses hydrogencarbonate + NH4(+) + ATP = carbamoyl phosphate + ADP + H2O + H(+). It functions in the pathway metabolic intermediate metabolism; carbamoyl phosphate degradation; CO(2) and NH(3) from carbamoyl phosphate: step 1/1. The chain is Carbamate kinase (CBK) from Giardia intestinalis (Giardia lamblia).